Here is a 361-residue protein sequence, read N- to C-terminus: tRNA 2-selenouridine synthase (361 aa).

Positions 11-134 (LLADTPLIDV…LRQTAIQATW (124 aa)) constitute a Rhodanese domain. C94 serves as the catalytic S-selanylcysteine intermediate.

The protein belongs to the SelU family. In terms of assembly, monomer.

It carries out the reaction 5-methylaminomethyl-2-thiouridine(34) in tRNA + selenophosphate + (2E)-geranyl diphosphate + H2O + H(+) = 5-methylaminomethyl-2-selenouridine(34) in tRNA + (2E)-thiogeraniol + phosphate + diphosphate. The enzyme catalyses 5-methylaminomethyl-2-thiouridine(34) in tRNA + (2E)-geranyl diphosphate = 5-methylaminomethyl-S-(2E)-geranyl-thiouridine(34) in tRNA + diphosphate. It catalyses the reaction 5-methylaminomethyl-S-(2E)-geranyl-thiouridine(34) in tRNA + selenophosphate + H(+) = 5-methylaminomethyl-2-(Se-phospho)selenouridine(34) in tRNA + (2E)-thiogeraniol. The catalysed reaction is 5-methylaminomethyl-2-(Se-phospho)selenouridine(34) in tRNA + H2O = 5-methylaminomethyl-2-selenouridine(34) in tRNA + phosphate. Functionally, involved in the post-transcriptional modification of the uridine at the wobble position (U34) of tRNA(Lys), tRNA(Glu) and tRNA(Gln). Catalyzes the conversion of 2-thiouridine (S2U-RNA) to 2-selenouridine (Se2U-RNA). Acts in a two-step process involving geranylation of 2-thiouridine (S2U) to S-geranyl-2-thiouridine (geS2U) and subsequent selenation of the latter derivative to 2-selenouridine (Se2U) in the tRNA chain. The chain is tRNA 2-selenouridine synthase from Salmonella schwarzengrund (strain CVM19633).